The following is a 212-amino-acid chain: ER lumen protein-retaining receptor 1 (212 aa).

At 1 to 4 (MNLF) the chain is on the lumenal side. The helical transmembrane segment at 5-24 (RFLGDLSHLLAIILLLLKIW) threads the bilayer. The Cytoplasmic portion of the chain corresponds to 25 to 32 (KSRSCAGI). The chain crosses the membrane as a helical span at residues 33-52 (SGKSQVLFAVVFTARYLDLF). An interaction with the K-D-E-L motif on target proteins region spans residues 47 to 48 (RY). Topologically, residues 53–58 (TNYISL) are lumenal. Residues 59 to 79 (YNTCMKVVYIACSFTTVWMIY) form a helical membrane-spanning segment. The Cytoplasmic portion of the chain corresponds to 80–92 (SKFKATYDGNHDT). Residues 93–110 (FRVEFLVVPTAVLAFLVN) form a helical membrane-spanning segment. Over 111-116 (HDFTPL) the chain is Lumenal. A helical membrane pass occupies residues 117–135 (EILWTFSIYLESVAILPQL). The Cytoplasmic segment spans residues 136–149 (FMVSKTGEAETITS). The chain crosses the membrane as a helical span at residues 150-168 (HYLFALGVYRTLYLFNWIW). Residues 159 to 169 (RTLYLFNWIWR) are interaction with the K-D-E-L motif on target proteins. At 169–178 (RYHFEGFFDL) the chain is on the lumenal side. The helical transmembrane segment at 179 to 199 (IAIVAGLVQTVLYCDFFYLYI) threads the bilayer. Over 200–212 (TKVLKGKKLSLPA) the chain is Cytoplasmic. The important for recycling of cargo proteins with the sequence motif K-D-E-L from the Golgi to the endoplasmic reticulum stretch occupies residues 204–207 (KGKK). Phosphoserine; by PKA is present on Ser-209.

Belongs to the ERD2 family. As to quaternary structure, upon ligand binding the receptor oligomerizes and interacts with components of the transport machinery such as ARFGAP1 and ARF1. Post-translationally, phosphorylation by PKA at Ser-209 is required for endoplasmic reticulum retention function.

It is found in the golgi apparatus membrane. The protein resides in the cytoplasmic vesicle. The protein localises to the COPI-coated vesicle membrane. Its subcellular location is the endoplasmic reticulum membrane. It localises to the endoplasmic reticulum-Golgi intermediate compartment membrane. Its function is as follows. Receptor for the C-terminal sequence motif K-D-E-L that is present on endoplasmic reticulum resident proteins and that mediates their recycling from the Golgi back to the endoplasmic reticulum. The polypeptide is ER lumen protein-retaining receptor 1 (Kdelr1) (Rattus norvegicus (Rat)).